A 532-amino-acid polypeptide reads, in one-letter code: Cytokinin dehydrogenase 1 (532 aa).

The first 17 residues, 1–17, serve as a signal peptide directing secretion; that stretch reads MAAIYLLIAALIASSHA. 2 N-linked (GlcNAc...) asparagine glycosylation sites follow: Asn52 and Asn63. One can recognise an FAD-binding PCMH-type domain in the interval 65–244; the sequence is TAALPAAVLF…TRARVAVEPA (180 aa). FAD-binding residues include Phe100, Gly102, Arg103, and Gly104. His105 bears the Pros-8alpha-FAD histidine mark. FAD contacts are provided by Ser106 and Gln110. A glycan (N-linked (GlcNAc...) asparagine) is linked at Asn133. Residues Asp168, Thr173, Ser179, Val183, and Ile234 each contribute to the FAD site. Residues Asn321 and Asn432 are each glycosylated (N-linked (GlcNAc...) asparagine). The FAD site is built by Tyr490, Ser525, and Gln528.

It belongs to the oxygen-dependent FAD-linked oxidoreductase family. As to quaternary structure, monomer. It depends on FAD as a cofactor.

The protein resides in the secreted. Its subcellular location is the extracellular space. The enzyme catalyses N(6)-dimethylallyladenine + A + H2O = 3-methyl-2-butenal + adenine + AH2. Catalyzes the oxidation of cytokinins, a family of N(6)-substituted adenine derivatives that are plant hormones, where the substituent is an isopentenyl group. This chain is Cytokinin dehydrogenase 1 (CKX1), found in Oryza sativa subsp. japonica (Rice).